A 289-amino-acid polypeptide reads, in one-letter code: Inorganic pyrophosphatase (289 aa).

The residue at position 2 (S2) is an N-acetylserine. The residue at position 57 (K57) is an N6-acetyllysine. 3 residues coordinate Mg(2+): D116, D121, and D153. K228 is subject to N6-acetyllysine. The residue at position 250 (S250) is a Phosphoserine.

It belongs to the PPase family. As to quaternary structure, homodimer. Mg(2+) serves as cofactor.

The protein resides in the cytoplasm. It catalyses the reaction diphosphate + H2O = 2 phosphate + H(+). The chain is Inorganic pyrophosphatase (PPA1) from Pongo abelii (Sumatran orangutan).